The primary structure comprises 101 residues: Small ribosomal subunit protein uS14 (101 aa).

The protein belongs to the universal ribosomal protein uS14 family. In terms of assembly, part of the 30S ribosomal subunit. Contacts proteins S3 and S10.

Its function is as follows. Binds 16S rRNA, required for the assembly of 30S particles and may also be responsible for determining the conformation of the 16S rRNA at the A site. This is Small ribosomal subunit protein uS14 from Vibrio campbellii (strain ATCC BAA-1116).